Here is a 323-residue protein sequence, read N- to C-terminus: Methionine adenosyltransferase 2 subunit beta (323 aa).

NADP(+) contacts are provided by residues 26–29, 49–51, 60–61, C82, R86, Y146, and L172; these read TGLL, YNR, and NL. The required for interaction with MAT2A stretch occupies residues 308–323; sequence LWPFQHDKRWRQTVFH.

It belongs to the dTDP-4-dehydrorhamnose reductase family. MAT2B subfamily. Heterotrimer; composed of a catalytic mat2a homodimer that binds one regulatory mat2b chain. Heterohexamer; composed of a central, catalytic mat2a homotetramer flanked on either side by a regulatory mat2b chain. NADP binding increases the affinity for mat2a.

The protein operates within amino-acid biosynthesis; S-adenosyl-L-methionine biosynthesis; S-adenosyl-L-methionine from L-methionine: step 1/1. Its function is as follows. Regulatory subunit of S-adenosylmethionine synthetase 2, an enzyme that catalyzes the formation of S-adenosylmethionine from methionine and ATP. Regulates MAT2A catalytic activity by changing its kinetic properties, increasing its affinity for L-methionine. Can bind NADP (in vitro). The polypeptide is Methionine adenosyltransferase 2 subunit beta (mat2b) (Danio rerio (Zebrafish)).